A 96-amino-acid polypeptide reads, in one-letter code: Large ribosomal subunit protein uL23 (96 aa).

It belongs to the universal ribosomal protein uL23 family. Part of the 50S ribosomal subunit. Contacts protein L29, and trigger factor when it is bound to the ribosome.

One of the early assembly proteins it binds 23S rRNA. One of the proteins that surrounds the polypeptide exit tunnel on the outside of the ribosome. Forms the main docking site for trigger factor binding to the ribosome. This Bacillus mycoides (strain KBAB4) (Bacillus weihenstephanensis) protein is Large ribosomal subunit protein uL23.